The primary structure comprises 478 residues: Quinoprotein glucose dehydrogenase B (478 aa).

Residues 1 to 24 (MNKHLLAKIALLSAVQLVTLSAFA) form the signal peptide. D-glucose is bound by residues Gln-100 and Asp-167. The active-site Proton acceptor is His-168. 2 residues coordinate D-glucose: Gln-192 and Arg-252. Residues 252 to 253 (RN) form a PQQ region. Ca(2+)-binding residues include Gly-271, Pro-272, Glu-277, Tyr-287, Ala-293, Tyr-295, Asp-297, and Glu-333. Positions 367, 372, and 401 each coordinate pyrroloquinoline quinone. Positions 430 to 432 (RYR) are PQQ.

This sequence belongs to the PQQ oxidoreductase GdhB family. As to quaternary structure, homodimer. It depends on pyrroloquinoline quinone as a cofactor. Ca(2+) is required as a cofactor.

The enzyme catalyses a ubiquinone + D-glucose = D-glucono-1,5-lactone + a ubiquinol. Oxidizes glucose to gluconolactone. The sequence is that of Quinoprotein glucose dehydrogenase B (gdhB) from Acinetobacter calcoaceticus.